A 160-amino-acid chain; its full sequence is Nucleotide-binding protein BAV0791 (160 aa).

It belongs to the YajQ family.

In terms of biological role, nucleotide-binding protein. This is Nucleotide-binding protein BAV0791 from Bordetella avium (strain 197N).